Consider the following 300-residue polypeptide: Lipoyl synthase 2 (300 aa).

7 residues coordinate [4Fe-4S] cluster: Cys-46, Cys-51, Cys-57, Cys-72, Cys-76, Cys-79, and Ser-294. The Radical SAM core domain maps to 58-283 (YAQKTATFLL…GKLAREMGFS (226 aa)).

It belongs to the radical SAM superfamily. Lipoyl synthase family. The cofactor is [4Fe-4S] cluster.

The protein resides in the cytoplasm. The catalysed reaction is [[Fe-S] cluster scaffold protein carrying a second [4Fe-4S](2+) cluster] + N(6)-octanoyl-L-lysyl-[protein] + 2 oxidized [2Fe-2S]-[ferredoxin] + 2 S-adenosyl-L-methionine + 4 H(+) = [[Fe-S] cluster scaffold protein] + N(6)-[(R)-dihydrolipoyl]-L-lysyl-[protein] + 4 Fe(3+) + 2 hydrogen sulfide + 2 5'-deoxyadenosine + 2 L-methionine + 2 reduced [2Fe-2S]-[ferredoxin]. The protein operates within protein modification; protein lipoylation via endogenous pathway; protein N(6)-(lipoyl)lysine from octanoyl-[acyl-carrier-protein]: step 2/2. Catalyzes the radical-mediated insertion of two sulfur atoms into the C-6 and C-8 positions of the octanoyl moiety bound to the lipoyl domains of lipoate-dependent enzymes, thereby converting the octanoylated domains into lipoylated derivatives. The protein is Lipoyl synthase 2 of Nostoc sp. (strain PCC 7120 / SAG 25.82 / UTEX 2576).